Here is a 123-residue protein sequence, read N- to C-terminus: Small ribosomal subunit protein uS13 (123 aa).

The disordered stretch occupies residues 95-123 (GLPVRGQRTKTNARTRKGPARTVAGKKKK).

The protein belongs to the universal ribosomal protein uS13 family. In terms of assembly, part of the 30S ribosomal subunit. Forms a loose heterodimer with protein S19. Forms two bridges to the 50S subunit in the 70S ribosome.

Its function is as follows. Located at the top of the head of the 30S subunit, it contacts several helices of the 16S rRNA. In the 70S ribosome it contacts the 23S rRNA (bridge B1a) and protein L5 of the 50S subunit (bridge B1b), connecting the 2 subunits; these bridges are implicated in subunit movement. Contacts the tRNAs in the A and P-sites. The protein is Small ribosomal subunit protein uS13 of Heliobacterium modesticaldum (strain ATCC 51547 / Ice1).